The following is a 159-amino-acid chain: Ribosomal RNA large subunit methyltransferase H (159 aa).

Residues Leu-76, Gly-108, and 127-132 (FSKMTF) contribute to the S-adenosyl-L-methionine site.

The protein belongs to the RNA methyltransferase RlmH family. As to quaternary structure, homodimer.

It localises to the cytoplasm. It carries out the reaction pseudouridine(1915) in 23S rRNA + S-adenosyl-L-methionine = N(3)-methylpseudouridine(1915) in 23S rRNA + S-adenosyl-L-homocysteine + H(+). Specifically methylates the pseudouridine at position 1915 (m3Psi1915) in 23S rRNA. In Bacillus velezensis (strain DSM 23117 / BGSC 10A6 / LMG 26770 / FZB42) (Bacillus amyloliquefaciens subsp. plantarum), this protein is Ribosomal RNA large subunit methyltransferase H.